The chain runs to 424 residues: Serine--tRNA ligase (424 aa).

Residue 230–232 (TAE) participates in L-serine binding. Residue 261 to 263 (RSE) coordinates ATP. Glu-284 serves as a coordination point for L-serine. 348-351 (EISS) serves as a coordination point for ATP. Ser-384 contacts L-serine.

The protein belongs to the class-II aminoacyl-tRNA synthetase family. Type-1 seryl-tRNA synthetase subfamily. In terms of assembly, homodimer. The tRNA molecule binds across the dimer.

The protein localises to the cytoplasm. It catalyses the reaction tRNA(Ser) + L-serine + ATP = L-seryl-tRNA(Ser) + AMP + diphosphate + H(+). It carries out the reaction tRNA(Sec) + L-serine + ATP = L-seryl-tRNA(Sec) + AMP + diphosphate + H(+). Its pathway is aminoacyl-tRNA biosynthesis; selenocysteinyl-tRNA(Sec) biosynthesis; L-seryl-tRNA(Sec) from L-serine and tRNA(Sec): step 1/1. Catalyzes the attachment of serine to tRNA(Ser). Is also able to aminoacylate tRNA(Sec) with serine, to form the misacylated tRNA L-seryl-tRNA(Sec), which will be further converted into selenocysteinyl-tRNA(Sec). The sequence is that of Serine--tRNA ligase from Streptococcus pneumoniae (strain JJA).